We begin with the raw amino-acid sequence, 445 residues long: Chromosome partition protein MukF (445 aa).

The tract at residues 212 to 240 (LDETSGNLRELQDTLNAAGDKLQEQLLRI) is leucine-zipper.

It belongs to the MukF family. In terms of assembly, interacts, and probably forms a ternary complex, with MukE and MukB via its C-terminal region. The complex formation is stimulated by calcium or magnesium. It is required for an interaction between MukE and MukB.

Its subcellular location is the cytoplasm. It is found in the nucleoid. Functionally, involved in chromosome condensation, segregation and cell cycle progression. May participate in facilitating chromosome segregation by condensation DNA from both sides of a centrally located replisome during cell division. Not required for mini-F plasmid partitioning. Probably acts via its interaction with MukB and MukE. Overexpression results in anucleate cells. It has a calcium binding activity. The chain is Chromosome partition protein MukF from Mannheimia succiniciproducens (strain KCTC 0769BP / MBEL55E).